The primary structure comprises 110 residues: Glutaredoxin-2 (110 aa).

In terms of domain architecture, Glutaredoxin spans 6-106; the sequence is KAFVEKAISN…KMIAELKENK (101 aa). A disulfide bond links C26 and C29.

The protein belongs to the glutaredoxin family.

The disulfide bond functions as an electron carrier in the glutathione-dependent synthesis of deoxyribonucleotides by the enzyme ribonucleotide reductase. In addition, it is also involved in reducing some disulfides in a coupled system with glutathione reductase. Thioltransferase catalyzes cellular thiol-disulfide transhydrogenation reactions. It transfers reducing equivalents to cytosolic protein and nonprotein disulfides. The protein is Glutaredoxin-2 (grx2) of Schizosaccharomyces pombe (strain 972 / ATCC 24843) (Fission yeast).